A 165-amino-acid polypeptide reads, in one-letter code: MERETQTYFFPDDGRIPNHPDFPLVVYQNALKDTGLAERIVTRHGWSNSWSGSVFPYHHYHSNTHEVLIALRREAVIQFGGEKGAAIPFKSGDAVVIPAGVGHKKLSSSPDFTVLGAYPGGVQYDMKTGKPNEREEAVKQIKQAALPANDPITGKREPLLEIWVK.

In terms of domain architecture, Cupin type-1 spans 28–139 (QNALKDTGLA…KPNEREEAVK (112 aa)).

This is an uncharacterized protein from Bacillus subtilis (strain 168).